The primary structure comprises 422 residues: Serine hydroxymethyltransferase (422 aa).

(6S)-5,6,7,8-tetrahydrofolate-binding positions include Leu-118 and 122 to 124 (GHL). Lys-227 carries the post-translational modification N6-(pyridoxal phosphate)lysine. Glu-242 lines the (6S)-5,6,7,8-tetrahydrofolate pocket.

This sequence belongs to the SHMT family. Homodimer. Pyridoxal 5'-phosphate is required as a cofactor.

Its subcellular location is the cytoplasm. The catalysed reaction is (6R)-5,10-methylene-5,6,7,8-tetrahydrofolate + glycine + H2O = (6S)-5,6,7,8-tetrahydrofolate + L-serine. It participates in one-carbon metabolism; tetrahydrofolate interconversion. It functions in the pathway amino-acid biosynthesis; glycine biosynthesis; glycine from L-serine: step 1/1. Functionally, catalyzes the reversible interconversion of serine and glycine with tetrahydrofolate (THF) serving as the one-carbon carrier. This reaction serves as the major source of one-carbon groups required for the biosynthesis of purines, thymidylate, methionine, and other important biomolecules. Also exhibits THF-independent aldolase activity toward beta-hydroxyamino acids, producing glycine and aldehydes, via a retro-aldol mechanism. This Sulfurihydrogenibium sp. (strain YO3AOP1) protein is Serine hydroxymethyltransferase.